We begin with the raw amino-acid sequence, 365 residues long: Succinyl-diaminopimelate desuccinylase (365 aa).

Histidine 64 is a binding site for Zn(2+). Residue aspartate 66 is part of the active site. Aspartate 95 contacts Zn(2+). Glutamate 125 acts as the Proton acceptor in catalysis. Residues glutamate 126, glutamate 154, and histidine 339 each contribute to the Zn(2+) site.

This sequence belongs to the peptidase M20A family. DapE subfamily. As to quaternary structure, homodimer. Zn(2+) serves as cofactor. Requires Co(2+) as cofactor.

It catalyses the reaction N-succinyl-(2S,6S)-2,6-diaminopimelate + H2O = (2S,6S)-2,6-diaminopimelate + succinate. It functions in the pathway amino-acid biosynthesis; L-lysine biosynthesis via DAP pathway; LL-2,6-diaminopimelate from (S)-tetrahydrodipicolinate (succinylase route): step 3/3. Catalyzes the hydrolysis of N-succinyl-L,L-diaminopimelic acid (SDAP), forming succinate and LL-2,6-diaminopimelate (DAP), an intermediate involved in the bacterial biosynthesis of lysine and meso-diaminopimelic acid, an essential component of bacterial cell walls. The sequence is that of Succinyl-diaminopimelate desuccinylase from Campylobacter curvus (strain 525.92).